The sequence spans 397 residues: Ribosomal RNA large subunit methyltransferase I (397 aa).

The PUA domain maps to 2–79; that stretch reads TAAIYLVKGR…KEEINKAFFV (78 aa).

The protein belongs to the methyltransferase superfamily. RlmI family.

The protein resides in the cytoplasm. It catalyses the reaction cytidine(1962) in 23S rRNA + S-adenosyl-L-methionine = 5-methylcytidine(1962) in 23S rRNA + S-adenosyl-L-homocysteine + H(+). Functionally, specifically methylates the cytosine at position 1962 (m5C1962) of 23S rRNA. This chain is Ribosomal RNA large subunit methyltransferase I, found in Vibrio parahaemolyticus serotype O3:K6 (strain RIMD 2210633).